The following is a 508-amino-acid chain: ATP synthase subunit alpha (508 aa).

169–176 (GDRQTGKT) is a binding site for ATP.

This sequence belongs to the ATPase alpha/beta chains family. F-type ATPases have 2 components, CF(1) - the catalytic core - and CF(0) - the membrane proton channel. CF(1) has five subunits: alpha(3), beta(3), gamma(1), delta(1), epsilon(1). CF(0) has three main subunits: a(1), b(2) and c(9-12). The alpha and beta chains form an alternating ring which encloses part of the gamma chain. CF(1) is attached to CF(0) by a central stalk formed by the gamma and epsilon chains, while a peripheral stalk is formed by the delta and b chains.

Its subcellular location is the cell inner membrane. The enzyme catalyses ATP + H2O + 4 H(+)(in) = ADP + phosphate + 5 H(+)(out). Functionally, produces ATP from ADP in the presence of a proton gradient across the membrane. The alpha chain is a regulatory subunit. This is ATP synthase subunit alpha from Allorhizobium ampelinum (strain ATCC BAA-846 / DSM 112012 / S4) (Agrobacterium vitis (strain S4)).